Consider the following 102-residue polypeptide: Hypersensitivity to hygromycin-B protein 1 (102 aa).

The N-terminal stretch at 1-17 (MSLSFLLFSPFLPPCFS) is a signal peptide. A helical transmembrane segment spans residues 18 to 38 (SISICLSVLSTVSFFFAFTIP). Residues 39–69 (HYVLRCGSVDEWHIHSSAEDFRTQRCVCAVK) are Cytoplasmic-facing. Residues 70–90 (LSASLLGCLLACASWSLLLEV) traverse the membrane as a helical segment. Residues 91–102 (SRIKWHVGTAYS) lie on the Extracellular side of the membrane.

Its subcellular location is the membrane. Involved in vacuolar trafficking. The polypeptide is Hypersensitivity to hygromycin-B protein 1 (Saccharomyces cerevisiae (strain ATCC 204508 / S288c) (Baker's yeast)).